The sequence spans 1381 residues: Hepatocyte growth factor receptor (1381 aa).

The signal sequence occupies residues 1 to 24; sequence MKAPAVLVPGILVLLFTLVQRSNG. The Extracellular portion of the chain corresponds to 25–932; the sequence is ECKEALAKSE…VIVQPDQNFT (908 aa). Residues 27 to 515 enclose the Sema domain; sequence KEALAKSEMN…TGKKITKIPL (489 aa). An N-linked (GlcNAc...) asparagine glycan is attached at N45. 4 cysteine pairs are disulfide-bonded: C95–C101, C98–C160, C133–C141, and C172–C175. The N-linked (GlcNAc...) asparagine glycan is linked to N106. N-linked (GlcNAc...) asparagine glycosylation is present at N149. N202 is a glycosylation site (N-linked (GlcNAc...) asparagine). 2 disulfides stabilise this stretch: C298-C363 and C385-C397. N-linked (GlcNAc...) asparagine glycosylation is found at N399 and N405. Disulfide bonds link C520–C538, C526–C561, C529–C545, and C541–C551. IPT/TIG domains are found at residues 563-655, 657-739, and 742-836; these read PAIY…FSYV, PIIT…FSYR, and PIVY…LIYV. Residue T582 is glycosylated (O-linked (Man) threonine). N-linked (GlcNAc...) asparagine glycans are attached at residues N607 and N635. Residues T676 and T761 are each glycosylated (O-linked (Man) threonine). N785, N879, and N930 each carry an N-linked (GlcNAc...) asparagine glycan. The chain crosses the membrane as a helical span at residues 933 to 955; it reads GLIAGVVSISIALLLLLGLFLWL. The Cytoplasmic portion of the chain corresponds to 956-1381; that stretch reads KKRKQIKDLG…EDNADDEVDT (426 aa). S966 is modified (phosphoserine). At T977 the chain carries Phosphothreonine. S990, S997, and S1000 each carry phosphoserine. Phosphotyrosine is present on Y1003. Positions 1078–1345 constitute a Protein kinase domain; the sequence is VHFNEVIGRG…RISAIFSTFI (268 aa). Residues 1084–1092 and K1110 contribute to the ATP site; that span reads IGRGHFGCV. The Proton acceptor role is filled by D1204. Residues 1212–1381 are interaction with RANBP9; the sequence is LDEKFTVKVA…EDNADDEVDT (170 aa). Phosphotyrosine is present on Y1230. Y1234 and Y1235 each carry phosphotyrosine; by autocatalysis. T1289 carries the phosphothreonine modification. Residues 1320 to 1359 form an interaction with MUC20 region; sequence WHPKAEMRPSFSELVSRISAIFSTFIGEHYVHVNATYVNV. A phosphotyrosine; by autocatalysis mark is found at Y1349 and Y1356. Phosphotyrosine is present on Y1365.

This sequence belongs to the protein kinase superfamily. Tyr protein kinase family. As to quaternary structure, heterodimer made of an alpha chain (50 kDa) and a beta chain (145 kDa) which are disulfide linked. Binds PLXNB1. Interacts when phosphorylated with downstream effectors including STAT3, PIK3R1, SRC, PCLG1, GRB2 and GAB1. Interacts with SPSB1, SPSB2 and SPSB4. Interacts with INPP5D/SHIP1. When phosphorylated at Tyr-1356, interacts with INPPL1/SHIP2. Interacts with RANBP9 and RANBP10, as well as SPSB1, SPSB2, SPSB3 and SPSB4. SPSB1 binding occurs in the presence and in the absence of HGF, however HGF treatment has a positive effect on this interaction. Interacts with MUC20; prevents interaction with GRB2 and suppresses hepatocyte growth factor-induced cell proliferation. Interacts with GRB10. Interacts with PTPN1 and PTPN2. Interacts with HSP90AA1 and HSP90AB1; the interaction suppresses MET kinase activity. Interacts with tensin TNS3. Interacts (when phosphorylated) with tensin TNS4 (via SH2 domain); the interaction increases MET protein stability by inhibiting MET endocytosis and subsequent lysosomal degradation. Post-translationally, autophosphorylated in response to ligand binding on Tyr-1234 and Tyr-1235 in the kinase domain leading to further phosphorylation of Tyr-1349 and Tyr-1356 in the C-terminal multifunctional docking site. Dephosphorylated by PTPRJ at Tyr-1349 and Tyr-1365. Dephosphorylated by PTPN1 and PTPN2. Ubiquitinated. Ubiquitination by CBL regulates the receptor stability and activity through proteasomal degradation. In terms of processing, O-mannosylation of IPT/TIG domains by TMEM260 is required for protein maturation. O-mannosylated residues are composed of single mannose glycans that are not elongated or modified.

The protein resides in the membrane. It catalyses the reaction L-tyrosyl-[protein] + ATP = O-phospho-L-tyrosyl-[protein] + ADP + H(+). In its inactive state, the C-terminal tail interacts with the catalytic domain and inhibits the kinase activity. Upon ligand binding, the C-terminal tail is displaced and becomes phosphorylated, thus increasing the kinase activity. In terms of biological role, receptor tyrosine kinase that transduces signals from the extracellular matrix into the cytoplasm by binding to hepatocyte growth factor/HGF ligand. Regulates many physiological processes including proliferation, scattering, morphogenesis and survival. Ligand binding at the cell surface induces autophosphorylation of MET on its intracellular domain that provides docking sites for downstream signaling molecules. Following activation by ligand, interacts with the PI3-kinase subunit PIK3R1, PLCG1, SRC, GRB2, STAT3 or the adapter GAB1. Recruitment of these downstream effectors by MET leads to the activation of several signaling cascades including the RAS-ERK, PI3 kinase-AKT, or PLCgamma-PKC. The RAS-ERK activation is associated with the morphogenetic effects while PI3K/AKT coordinates prosurvival effects. During embryonic development, MET signaling plays a role in gastrulation, development and migration of muscles and neuronal precursors, angiogenesis and kidney formation. In adults, participates in wound healing as well as organ regeneration and tissue remodeling. Also promotes differentiation and proliferation of hematopoietic cells. This chain is Hepatocyte growth factor receptor (MET), found in Papio anubis (Olive baboon).